Reading from the N-terminus, the 1107-residue chain is Ubiquitin-associated protein 2-like (1107 aa).

N-acetylmethionine is present on Met-1. The tract at residues Met-1–Ala-33 is disordered. The UBA domain maps to Asp-49–Gly-89. Residues Asp-92–Glu-229 are disordered. Over residues Glu-118 to Arg-132 the composition is skewed to basic and acidic residues. Over residues Arg-133–Ser-145 the composition is skewed to basic residues. Asymmetric dimethylarginine occurs at positions 187 and 190. Low complexity predominate over residues Asn-213–Gly-226. Residues Ser-376, Ser-380, and Ser-436 each carry the phosphoserine modification. Residue Thr-445 is modified to Phosphothreonine. 3 disordered regions span residues Ala-461 to Ser-513, Ser-550 to Leu-676, and Ala-689 to Gly-814. Ser-474, Ser-487, Ser-490, Ser-491, and Ser-497 each carry phosphoserine. Low complexity-rich tracts occupy residues Gln-494–Leu-505 and Ser-554–Ser-589. Positions Gly-590 to Glu-656 are enriched in polar residues. A phosphoserine mark is found at Ser-624, Ser-625, Ser-628, and Ser-629. Positions Ser-665 to Ser-675 are enriched in low complexity. Residues Ala-689–His-713 are compositionally biased toward polar residues. Positions Ser-714–Ser-804 are enriched in low complexity. 2 positions are modified to phosphoserine: Ser-872 and Ser-879. Disordered regions lie at residues Phe-885–Ala-921 and Gln-1060–Asn-1107. Composition is skewed to low complexity over residues Pro-893–Thr-916 and Gln-1073–Ser-1087. Residues Ile-1088–Asn-1107 are compositionally biased toward polar residues.

Interacts with BMI1. Part of a complex consisting of UBAP2L, BMI1 and RNF2. Interacts with G3BP1 (via NTF2 domain); promoting stress granule formation.

Its subcellular location is the nucleus. It is found in the chromosome. The protein localises to the cytoplasm. It localises to the stress granule. Functionally, recruits the ubiquitination machinery to RNA polymerase II for polyubiquitination, removal and degradation, when the transcription-coupled nucleotide excision repair (TC-NER) machinery fails to resolve DNA damage. Plays an important role in the activity of long-term repopulating hematopoietic stem cells (LT-HSCs). Is a regulator of stress granule assembly, required for their efficient formation. Required for proper brain development and neocortex lamination. The sequence is that of Ubiquitin-associated protein 2-like from Mus musculus (Mouse).